Consider the following 1052-residue polypeptide: MASAAVTPKLGWVQHQVTNGLHAVVGQVCRHPIHTLLVTALIAATTYLHVLEGTFRAANLGPGSKTDAAPFDVQSFLWGSRSLRLGETSSWRWQVGDLSEATGDGQVNHHWALVTLSFPGASVDDRSPAFLWNALPDSVGAEPITPTSNFFTSISNEFSLAFRVPYTQLSDFLEAVEFVASDKEDRSWAIRFPHGEGKPISLGRWLGNSWLSFLHRAKHAETVDMAIIGLGYLALNMTLVSLFRAMRQLGSRFWLAASVLLSGAFAFVFGLGVTTACGVPVDMLLLSEGIPFLVLTVGFEKPIRFTRAVLYASNQLRRGLQQRDVADKHDSRQRHMIPNAMLFAINREGWSIVQSYLLEIGALALGAVFRPRERFGQFCFLAAWMVLFDAILLFTFYATILCVKLEVTRMQNPGTLDLADDQHGPRIFGYKVNPTSLARWKLIMVGGFVLFNVLQLSSFFYRIMGGFMTNAALTPTTVSPFKVAANGLNDIYLAARAGGVETWVTVLPPIRYVMEASGLEMSAGRRPVFDGVLAGLESPLGRLCLMGALVFSLYLNNHLIPAARWHFSPGAPKESAAPAPPSSPASVPSAVPVPAPSSRSFEEIEALFKANQAESLTDDELAELCLRGKIAGYSLEKTLESIASAGSSSTATTRLEAFTRAVRIRRAAVSRTPSTRDLSGGIQESLLPYRNYNYELVHGACCENVIGYLPLPLGLAGPMVIDGQAYFIPMATTEGVLVASASRGCKAINTGGGAVTMLKGDGMTRGPCLGFPSAKRAAEAQRWVESPVGHQVLTDAFNATSRFARLQTLTVAQAGTYLYIRFRTTTGDAMGMNMISKGVEKALQAMTAHGFPDMNTITLSGNFCADKKSAAINWIGGRGKSVIAEATIPADTVRKVLKTDIDALVELNTAKNLVGSAMAGSMGGFNAHASNLVQAVFLATGQDPAQNVESSSCITTMKKIDGNLHIAVSMPSMEVGTIGGGTILEAQGAMLDLLGVRGAHPTDPGANARRLARIVAAAVLAGELSTCSALAAGHLVNAHMRHNRSAASSEKK.

Helical transmembrane passes span 223–243, 253–273, 279–299, 349–369, 378–398, and 440–460; these read VDMA…VSLF, FWLA…GLGV, VPVD…TVGF, GWSI…GAVF, FCFL…TFYA, and WKLI…SSFF. The SSD domain maps to 224–403; sequence DMAIIGLGYL…FTFYATILCV (180 aa). Residues 461-617 form a linker region; the sequence is YRIMGGFMTN…FKANQAESLT (157 aa). The disordered stretch occupies residues 571-594; the sequence is APKESAAPAPPSSPASVPSAVPVP. Low complexity predominate over residues 584–594; that stretch reads PASVPSAVPVP. Residues 618–1044 form a catalytic region; it reads DDELAELCLR…LVNAHMRHNR (427 aa). Glu-734 acts as the Charge relay system in catalysis. Asn-798 carries N-linked (GlcNAc...) asparagine glycosylation. Catalysis depends on charge relay system residues Lys-867 and Asp-943. The Proton donor role is filled by His-1039. Residue Asn-1043 is glycosylated (N-linked (GlcNAc...) asparagine).

This sequence belongs to the HMG-CoA reductase family.

The protein localises to the endoplasmic reticulum membrane. The catalysed reaction is (R)-mevalonate + 2 NADP(+) + CoA = (3S)-3-hydroxy-3-methylglutaryl-CoA + 2 NADPH + 2 H(+). The protein operates within polyketide biosynthesis; lovastatin biosynthesis. In terms of biological role, HMG-CoA reductase; part of the gene cluster that mediates the biosynthesis of monakolin K, also known as lovastatin, and which acts as a potent competitive inhibitor of HMG-CoA reductase. Monakolin K biosynthesis is performed in two stages. The first stage is catalyzed by the nonaketide synthase mokA, which belongs to type I polyketide synthases and catalyzes the iterative nine-step formation of the polyketide. This PKS stage is completed by the action of dehydrogenase mokE, which catalyzes the NADPH-dependent reduction of the unsaturated tetra-, penta- and heptaketide intermediates that arise during the mokA-mediated biosynthesis of the nonaketide chain and leads to dihydromonacolin L. Covalently bound dihydromonacolin L is released from mokA by the mokD esterase. Conversion of dihydromonacolin L into monacolin L and then monacolin J is subsequently performed with the participation of molecular oxygen and P450 monoogygenase mokC. Finally, mokF performs the conversion of monacoline J to monacoline K through the addition of the side-chain diketide moiety (2R)-2-methylbutanoate produced by the diketide synthase mokB. HMG-CoA reductase mokG may act as a down-regulator of monacolin K production. This Monascus pilosus (Red mold) protein is 3-hydroxy-3-methylglutaryl coenzyme A reductase mokG.